The sequence spans 591 residues: Inactive metallocarboxypeptidase ECM14 (591 aa).

An N-terminal signal peptide occupies residues 1-21 (MRLFAHLAVLAILACAVPITA). Residues 22–175 (IPSFLSNSYP…QTIYESYPSS (154 aa)) constitute a propeptide that is removed on maturation. The Peptidase M14 domain occupies 203–523 (DYQPFSVIVP…NAVMVLGRFL (321 aa)). 2 residues coordinate Zn(2+): His-265 and Glu-268. Substrate contacts are provided by residues 265-268 (HARE), Arg-323, and 340-341 (DR). A disulfide bridge connects residues Cys-334 and Cys-357. 3 N-linked (GlcNAc...) asparagine glycosylation sites follow: Asn-350, Asn-381, and Asn-386. His-397 is a Zn(2+) binding site. 398 to 399 (SY) lines the substrate pocket. Residues 533–591 (DWEDESQRPKAGEDDIPSDNELDENDDSWIPYDYRNHDDQNEGEGYDNDEWGFRRRRKR) are disordered. Acidic residues-rich tracts occupy residues 546 to 559 (DDIPSDNELDENDD) and 573 to 582 (NEGEGYDNDE).

Belongs to the peptidase M14 family. Requires Zn(2+) as cofactor.

The protein localises to the vacuole. It localises to the secreted. Functionally, inactive carboxypeptidase that may play a role in cell wall organization and biogenesis. The sequence is that of Inactive metallocarboxypeptidase ECM14 (ECM14) from Paracoccidioides brasiliensis (strain Pb03).